Reading from the N-terminus, the 378-residue chain is Histidinol-phosphate aminotransferase (378 aa).

The segment at 1–20 (MSVSAKETQRHPARPEPRPG) is disordered. A compositionally biased stretch (basic and acidic residues) spans 7 to 17 (ETQRHPARPEP). Lysine 232 is modified (N6-(pyridoxal phosphate)lysine).

It belongs to the class-II pyridoxal-phosphate-dependent aminotransferase family. Histidinol-phosphate aminotransferase subfamily. In terms of assembly, homodimer. Requires pyridoxal 5'-phosphate as cofactor.

It catalyses the reaction L-histidinol phosphate + 2-oxoglutarate = 3-(imidazol-4-yl)-2-oxopropyl phosphate + L-glutamate. The protein operates within amino-acid biosynthesis; L-histidine biosynthesis; L-histidine from 5-phospho-alpha-D-ribose 1-diphosphate: step 7/9. In Azorhizobium caulinodans (strain ATCC 43989 / DSM 5975 / JCM 20966 / LMG 6465 / NBRC 14845 / NCIMB 13405 / ORS 571), this protein is Histidinol-phosphate aminotransferase.